We begin with the raw amino-acid sequence, 214 residues long: Thymidylate kinase (214 aa).

12–19 is an ATP binding site; the sequence is GLDGSGKS.

The protein belongs to the thymidylate kinase family.

It catalyses the reaction dTMP + ATP = dTDP + ADP. Its function is as follows. Phosphorylation of dTMP to form dTDP in both de novo and salvage pathways of dTTP synthesis. The protein is Thymidylate kinase of Bdellovibrio bacteriovorus (strain ATCC 15356 / DSM 50701 / NCIMB 9529 / HD100).